Reading from the N-terminus, the 394-residue chain is NAD(P)H-quinone oxidoreductase subunit H (394 aa).

It belongs to the complex I 49 kDa subunit family. In terms of assembly, NDH-1 can be composed of about 15 different subunits; different subcomplexes with different compositions have been identified which probably have different functions.

Its subcellular location is the cellular thylakoid membrane. The catalysed reaction is a plastoquinone + NADH + (n+1) H(+)(in) = a plastoquinol + NAD(+) + n H(+)(out). The enzyme catalyses a plastoquinone + NADPH + (n+1) H(+)(in) = a plastoquinol + NADP(+) + n H(+)(out). In terms of biological role, NDH-1 shuttles electrons from an unknown electron donor, via FMN and iron-sulfur (Fe-S) centers, to quinones in the respiratory and/or the photosynthetic chain. The immediate electron acceptor for the enzyme in this species is believed to be plastoquinone. Couples the redox reaction to proton translocation, and thus conserves the redox energy in a proton gradient. Cyanobacterial NDH-1 also plays a role in inorganic carbon-concentration. In Trichodesmium erythraeum (strain IMS101), this protein is NAD(P)H-quinone oxidoreductase subunit H.